A 302-amino-acid polypeptide reads, in one-letter code: D-alanine--D-alanine ligase (302 aa).

The 195-residue stretch at 100-294 (KALFRREGLL…FPELVEKLIQ (195 aa)) folds into the ATP-grasp domain. ATP is bound at residue 127 to 180 (GLNYPIFVKSNIGGSSVNVHLVTNYEELFIAMEALFNAGEEVLLEEAIIGQEVT). Residues Asp248, Glu261, and Asn263 each contribute to the Mg(2+) site.

This sequence belongs to the D-alanine--D-alanine ligase family. Requires Mg(2+) as cofactor. The cofactor is Mn(2+).

It is found in the cytoplasm. The enzyme catalyses 2 D-alanine + ATP = D-alanyl-D-alanine + ADP + phosphate + H(+). It participates in cell wall biogenesis; peptidoglycan biosynthesis. Its function is as follows. Cell wall formation. In Lawsonia intracellularis (strain PHE/MN1-00), this protein is D-alanine--D-alanine ligase.